The chain runs to 192 residues: Protein GrpE (192 aa).

Belongs to the GrpE family. Homodimer.

The protein resides in the cytoplasm. Participates actively in the response to hyperosmotic and heat shock by preventing the aggregation of stress-denatured proteins, in association with DnaK and GrpE. It is the nucleotide exchange factor for DnaK and may function as a thermosensor. Unfolded proteins bind initially to DnaJ; upon interaction with the DnaJ-bound protein, DnaK hydrolyzes its bound ATP, resulting in the formation of a stable complex. GrpE releases ADP from DnaK; ATP binding to DnaK triggers the release of the substrate protein, thus completing the reaction cycle. Several rounds of ATP-dependent interactions between DnaJ, DnaK and GrpE are required for fully efficient folding. The sequence is that of Protein GrpE from Neisseria gonorrhoeae (strain ATCC 700825 / FA 1090).